The sequence spans 485 residues: FAD-dependent monooxygenase elcH (485 aa).

A signal peptide spans 1 to 19; sequence MFTLRSLAILAVFAATALA. Asp-59 and Gly-73 together coordinate FAD. N-linked (GlcNAc...) asparagine glycans are attached at residues Asn-126, Asn-147, and Asn-157.

It belongs to the paxM FAD-dependent monooxygenase family. Requires FAD as cofactor.

It participates in secondary metabolite biosynthesis. Functionally, FAD-dependent monooxygenase; part of the gene cluster that mediates the biosynthesis of elsinochrome C, a perelyenequinone phytotoxin structurally similar to cercosporin. The first step of elsinochrome C biosynthesis is performed by the polyketide synthase elcA which catalyzes the formation of nor-toralactone. The starter unit acyltransferase (SAT) domain of elcA initiates polyketide extension by the selective utilization of acetyl-CoA, which is elongated to the heptaketide in the beta-ketoacyl synthase (KS) domain by successive condensations with six malonyl units introduced by the malonyl acyltransferase (MAT) domain. The product template (PT) domain catalyzes C4-C9 and C2-C11 aldol cyclizations and dehydrations to a trihydroxynaphthalene, which is thought to be delivered to the thioesterase (TE) domain for product release. The bifunctional enzyme elcB then methylates nor-toralactone to toralactone before conducting an unusual oxidative aromatic ring opening. The next step in perylenequinone biosynthesis is an O-methylation at the nascent OH-6 of the elcB product performed by the O-methyltransferase elcD. The oxidative coupling of the two monomeric naphthol units in perylenequinone biosynthesis is catalyzed by the FAD-dependent monooxygenase elcE and the multicopper oxidase elcG. ElcG might catalyze the first intermolecular coupling in a regio- and stereo-selective manner via a phenol radical coupling mechanism and the elcE could forge the second C-C bond intramolecularly via a hydride transfer mechanism. The fasciclin domain-containing protein elcF might also play a role duting this step. The last piece of the puzzle in the biosynthesis of elsinochrome C is the additional annulation by enolate coupling to afford the dihydrobenzo(ghi)perylenequinone system, catalyzed by the FAD-dependent monooxygenase elcH. The polypeptide is FAD-dependent monooxygenase elcH (Phaeosphaeria nodorum (strain SN15 / ATCC MYA-4574 / FGSC 10173) (Glume blotch fungus)).